We begin with the raw amino-acid sequence, 298 residues long: Urease accessory protein UreD 3 (298 aa).

The segment at 1–30 is disordered; that stretch reads MADEAGTRSAGGRPIPAAEPLRPALSRQRS.

The protein belongs to the UreD family. In terms of assembly, ureD, UreF and UreG form a complex that acts as a GTP-hydrolysis-dependent molecular chaperone, activating the urease apoprotein by helping to assemble the nickel containing metallocenter of UreC. The UreE protein probably delivers the nickel.

The protein resides in the cytoplasm. Functionally, required for maturation of urease via the functional incorporation of the urease nickel metallocenter. The polypeptide is Urease accessory protein UreD 3 (Methylorubrum extorquens (strain PA1) (Methylobacterium extorquens)).